The primary structure comprises 249 residues: 2-C-methyl-D-erythritol 4-phosphate cytidylyltransferase (249 aa).

It belongs to the IspD/TarI cytidylyltransferase family. IspD subfamily.

The enzyme catalyses 2-C-methyl-D-erythritol 4-phosphate + CTP + H(+) = 4-CDP-2-C-methyl-D-erythritol + diphosphate. The protein operates within isoprenoid biosynthesis; isopentenyl diphosphate biosynthesis via DXP pathway; isopentenyl diphosphate from 1-deoxy-D-xylulose 5-phosphate: step 2/6. In terms of biological role, catalyzes the formation of 4-diphosphocytidyl-2-C-methyl-D-erythritol from CTP and 2-C-methyl-D-erythritol 4-phosphate (MEP). This chain is 2-C-methyl-D-erythritol 4-phosphate cytidylyltransferase, found in Thermobifida fusca (strain YX).